We begin with the raw amino-acid sequence, 273 residues long: Testis-specific serine/threonine-protein kinase 6 (273 aa).

One can recognise a Protein kinase domain in the interval 12–267 (YKLGRTIGEG…AGQVARNGWL (256 aa)). ATP contacts are provided by residues 18–26 (IGEGSYSKV) and Lys41. Asp135 serves as the catalytic Proton acceptor.

It belongs to the protein kinase superfamily. CAMK Ser/Thr protein kinase family. Microtubule inner protein component of sperm flagellar doublet microtubules. Interacts with HSP90; this interaction stabilizes and activates TSSK6. Interacts with the heat shock proteins HSPCB, HSPA8 and HSPA1A. These interactions appear to be required for TSSK6 kinase activity. Interacts with TSACC; this interaction is direct and recruits TSACC to HSP90, which is essential for kinase activity. Mg(2+) serves as cofactor. Autophosphorylated. In terms of processing, ubiquitinated; HSP90 activity negatively regulates ubiquitination and degradation. Expressed in the testis, localized to the heads of elongating spermatids.

It localises to the cytoplasm. The protein resides in the cytoskeleton. It is found in the flagellum axoneme. The protein localises to the nucleus. The catalysed reaction is L-seryl-[protein] + ATP = O-phospho-L-seryl-[protein] + ADP + H(+). It catalyses the reaction L-threonyl-[protein] + ATP = O-phospho-L-threonyl-[protein] + ADP + H(+). Its function is as follows. Serine/threonine-protein kinase component of the sperm flagellar doublet microtubules. May act as a regulator of sperm motility by mediating phosphorylation of sperm doublet microtubule proteins. Plays a role in DNA condensation during postmeiotic chromatin remodeling and histone-to-protamine transition during spermatogenesis. The chain is Testis-specific serine/threonine-protein kinase 6 from Mus musculus (Mouse).